The following is a 237-amino-acid chain: Endoglucanase-1 (237 aa).

Positions 1–16 (MKAFHLLAALAGAAVA) are cleaved as a signal peptide. A Pyrrolidone carboxylic acid modification is found at Gln-17.

This sequence belongs to the glycosyl hydrolase 12 (cellulase H) family.

The protein resides in the secreted. The catalysed reaction is Endohydrolysis of (1-&gt;4)-beta-D-glucosidic linkages in cellulose, lichenin and cereal beta-D-glucans.. The sequence is that of Endoglucanase-1 from Aspergillus aculeatus.